The following is an 806-amino-acid chain: MVDSSTVLIFLLVLGGGQSELDTKITSSGEAAEWEDPDLSLQGSCQPVPSCQKCILSHPSCAWCKQLNFTASGEAEARRCARREELLARGCPAQELEEPRGRQEVLQDKPLSQGDRGEGATQLAPQRIRVTLRPGEPQKFRVRFLRAAGYPVDLYYLMDLSYSMKDDLERVRQLGHALLVRLQEVTHSVRIGFGSFVDKTVLPFVSTVPSKLHHPCPSRLERCQPPFSFHHVLSLTGDAQAFEREVGRQNVSGNLDSPEGGFDAILQAALCQEQIGWRNVSRLLVFTSDDTFHTAGDGKLGGIFMPSDGRCHLDSNGVYTNSAEFDYPSVGQVAQALTAANIQPIFAVTGATLPVYQELRQLIPKSAVGELSEDSSNVVQLIMDAYDSLSSTVTLEHSPLPPGVSISFESHCKGPEKTEGEAGDRGQCNDVRVNQTVDFWVTLQATHCLPEAHVLRLWALGFSEELTVELHTVCDCNCGDAQPHAPYCSDGQGDLQCGICSCAPGRLGQLCECSEADLSSPDLESGCRAPNGTGPLCSGKGRCQCGRCSCSGQSSGRLCECDDASCERHEGILCGGFGHCQCGVCHCHANHTGRACECSKSVDSCVSPEGGLCSGHGYCKCNRCQCLDGYYGALCDQCLGCKSPCEQYRDCAECGAFGTGPLAANCSVVCADVNVTLTLAPNLDDGWCKERTIDNQLFFFLVEHAASGIVLRVRPQEKGVDHTRAIILGCTGGIVAVGLGLVLAYRLSVEIYDRREYRRFEKEQQQLNWKQDNNPLYKSAITTTVNPRFQGTNGRSPSLSLTREAD.

The signal sequence occupies residues methionine 1–serine 19. The Extracellular portion of the chain corresponds to glutamate 20 to arginine 724. Positions serine 44–proline 92 constitute a PSI domain. Intrachain disulfides connect cysteine 51/cysteine 476, cysteine 54/cysteine 80, cysteine 64/cysteine 91, cysteine 216/cysteine 223, cysteine 271/cysteine 311, cysteine 412/cysteine 428, cysteine 448/cysteine 474, cysteine 478/cysteine 497, cysteine 488/cysteine 500, cysteine 502/cysteine 511, cysteine 513/cysteine 545, cysteine 527/cysteine 543, cysteine 537/cysteine 548, cysteine 550/cysteine 559, cysteine 561/cysteine 582, cysteine 566/cysteine 580, cysteine 574/cysteine 585, cysteine 587/cysteine 596, cysteine 598/cysteine 621, cysteine 605/cysteine 619, cysteine 613/cysteine 624, cysteine 626/cysteine 635, cysteine 638/cysteine 641, cysteine 645/cysteine 688, cysteine 651/cysteine 670, and cysteine 654/cysteine 666. N-linked (GlcNAc...) asparagine glycosylation is present at asparagine 68. A compositionally biased stretch (basic and acidic residues) spans glutamate 98 to glutamine 107. The interval glutamate 98–leucine 123 is disordered. Residues tyrosine 150 to leucine 389 enclose the VWFA domain. 2 residues coordinate Mg(2+): serine 161 and serine 163. 4 residues coordinate Ca(2+): serine 163, aspartate 166, aspartate 167, and aspartate 198. Asparagine 250 carries N-linked (GlcNAc...) asparagine glycosylation. Asparagine 254, aspartate 256, proline 258, and glutamate 259 together coordinate Ca(2+). Residue glutamate 259 participates in Mg(2+) binding. Asparagine 279 carries an N-linked (GlcNAc...) asparagine glycan. Positions 289 and 373 each coordinate Ca(2+). N-linked (GlcNAc...) asparagine glycosylation occurs at asparagine 434. I-EGF domains lie at cysteine 478–glutamate 512, cysteine 513–glutamate 560, cysteine 561–glutamate 597, and cysteine 598–aspartate 636. N-linked (GlcNAc...) asparagine glycosylation is present at asparagine 531. Asparagine 590 carries N-linked (GlcNAc...) asparagine glycosylation. 2 N-linked (GlcNAc...) asparagine glycosylation sites follow: asparagine 665 and asparagine 674. The chain crosses the membrane as a helical span at residues alanine 725–tyrosine 745. The Cytoplasmic segment spans residues arginine 746–aspartate 806. Positions asparagine 786–aspartate 806 are disordered.

The protein belongs to the integrin beta chain family. Heterodimer of an alpha and a beta subunit. ITGB7/beta-7 associates with either ITGA4/alpha-4 or ITGAE/alpha-E. Integrin ITGA4/ITGB7 interacts with MADCAM1. Integrin ITGA4/ITGB7 interacts with VCAM1 and fibronectin. Interacts with FLNA (via filamin repeats 4, 9, 12, 17, 19, 21, and 23).

The protein resides in the cell membrane. In terms of biological role, integrin ITGA4/ITGB7 (alpha-4/beta-7) (Peyer patches-specific homing receptor LPAM-1) is an adhesion molecule that mediates lymphocyte migration and homing to gut-associated lymphoid tissue (GALT). Integrin ITGA4/ITGB7 interacts with the cell surface adhesion molecules MADCAM1 which is normally expressed by the vascular endothelium of the gastrointestinal tract. Also interacts with VCAM1 and fibronectin, an extracellular matrix component. It recognizes one or more domains within the alternatively spliced CS-1 region of fibronectin. Interactions involve the tripeptide L-D-T in MADCAM1, and L-D-V in fibronectin. Integrin ITGAE/ITGB7 (alpha-E/beta-7, HML-1) is a receptor for E-cadherin. The polypeptide is Integrin beta-7 (Itgb7) (Mus musculus (Mouse)).